Here is a 578-residue protein sequence, read N- to C-terminus: Kelch-like protein 30 (578 aa).

Positions 33–100 (ADVTLLVGGR…VYTGRLTITQ (68 aa)) constitute a BTB domain. In terms of domain architecture, BACK spans 153 to 255 (KAWAFLRENF…EACRAALSQG (103 aa)). Kelch repeat units lie at residues 270–326 (VLVV…ALNN), 327–377 (NIYV…ALNG), 378–422 (EIYV…GCRG), 424–471 (LYLV…ALHG), 473–513 (LYLI…PLGD), and 514–563 (ALYV…TVFL).

The sequence is that of Kelch-like protein 30 (KLHL30) from Homo sapiens (Human).